The chain runs to 498 residues: Bifunctional protein GlmU (498 aa).

The interval 1 to 238 (MSDAAVVILA…PALVAGVNDR (238 aa)) is pyrophosphorylase. Residues 9–12 (LAAG), K23, Q80, and 85–86 (GT) each bind UDP-N-acetyl-alpha-D-glucosamine. Residue D111 participates in Mg(2+) binding. UDP-N-acetyl-alpha-D-glucosamine is bound by residues G148, E163, N178, and N236. Residue N236 coordinates Mg(2+). Residues 239–259 (VQLADLGAELNRRVVAAHQRA) are linker. An N-acetyltransferase region spans residues 260-498 (GVTIVDPATT…TAKPAPATGE (239 aa)). UDP-N-acetyl-alpha-D-glucosamine contacts are provided by R341 and K359. H371 (proton acceptor) is an active-site residue. Residues Y374 and N385 each contribute to the UDP-N-acetyl-alpha-D-glucosamine site. Residues A388, 394–395 (NY), S413, and A431 contribute to the acetyl-CoA site. A disordered region spans residues 470–498 (AAEAAAADGDTAAADRAAATAKPAPATGE).

The protein in the N-terminal section; belongs to the N-acetylglucosamine-1-phosphate uridyltransferase family. It in the C-terminal section; belongs to the transferase hexapeptide repeat family. Homotrimer. It depends on Mg(2+) as a cofactor.

It is found in the cytoplasm. The catalysed reaction is alpha-D-glucosamine 1-phosphate + acetyl-CoA = N-acetyl-alpha-D-glucosamine 1-phosphate + CoA + H(+). It carries out the reaction N-acetyl-alpha-D-glucosamine 1-phosphate + UTP + H(+) = UDP-N-acetyl-alpha-D-glucosamine + diphosphate. It functions in the pathway nucleotide-sugar biosynthesis; UDP-N-acetyl-alpha-D-glucosamine biosynthesis; N-acetyl-alpha-D-glucosamine 1-phosphate from alpha-D-glucosamine 6-phosphate (route II): step 2/2. Its pathway is nucleotide-sugar biosynthesis; UDP-N-acetyl-alpha-D-glucosamine biosynthesis; UDP-N-acetyl-alpha-D-glucosamine from N-acetyl-alpha-D-glucosamine 1-phosphate: step 1/1. It participates in bacterial outer membrane biogenesis; LPS lipid A biosynthesis. Catalyzes the last two sequential reactions in the de novo biosynthetic pathway for UDP-N-acetylglucosamine (UDP-GlcNAc). The C-terminal domain catalyzes the transfer of acetyl group from acetyl coenzyme A to glucosamine-1-phosphate (GlcN-1-P) to produce N-acetylglucosamine-1-phosphate (GlcNAc-1-P), which is converted into UDP-GlcNAc by the transfer of uridine 5-monophosphate (from uridine 5-triphosphate), a reaction catalyzed by the N-terminal domain. This chain is Bifunctional protein GlmU, found in Mycolicibacterium gilvum (strain PYR-GCK) (Mycobacterium gilvum (strain PYR-GCK)).